Consider the following 132-residue polypeptide: ATP synthase epsilon chain (132 aa).

The protein belongs to the ATPase epsilon chain family. F-type ATPases have 2 components, CF(1) - the catalytic core - and CF(0) - the membrane proton channel. CF(1) has five subunits: alpha(3), beta(3), gamma(1), delta(1), epsilon(1). CF(0) has four main subunits: a, b, b' and c.

It is found in the cellular chromatophore membrane. Produces ATP from ADP in the presence of a proton gradient across the membrane. This chain is ATP synthase epsilon chain (atpC), found in Rhodobacter capsulatus (Rhodopseudomonas capsulata).